Reading from the N-terminus, the 92-residue chain is RNA-binding protein Hfq (92 aa).

The 60-residue stretch at 9-68 (DPFLNALRRERVPVSVYLVNGIKLQGTIESFDQFVVLLRNTVSQMVYKHAISTVVPARNV) folds into the Sm domain.

Belongs to the Hfq family. In terms of assembly, homohexamer.

In terms of biological role, RNA chaperone that binds small regulatory RNA (sRNAs) and mRNAs to facilitate mRNA translational regulation in response to envelope stress, environmental stress and changes in metabolite concentrations. Also binds with high specificity to tRNAs. The chain is RNA-binding protein Hfq from Xylella fastidiosa (strain M12).